We begin with the raw amino-acid sequence, 573 residues long: 2-succinyl-5-enolpyruvyl-6-hydroxy-3-cyclohexene-1-carboxylate synthase (573 aa).

It belongs to the TPP enzyme family. MenD subfamily. In terms of assembly, homodimer. Requires Mg(2+) as cofactor. It depends on Mn(2+) as a cofactor. The cofactor is thiamine diphosphate.

The catalysed reaction is isochorismate + 2-oxoglutarate + H(+) = 5-enolpyruvoyl-6-hydroxy-2-succinyl-cyclohex-3-ene-1-carboxylate + CO2. It participates in quinol/quinone metabolism; 1,4-dihydroxy-2-naphthoate biosynthesis; 1,4-dihydroxy-2-naphthoate from chorismate: step 2/7. It functions in the pathway quinol/quinone metabolism; menaquinone biosynthesis. Catalyzes the thiamine diphosphate-dependent decarboxylation of 2-oxoglutarate and the subsequent addition of the resulting succinic semialdehyde-thiamine pyrophosphate anion to isochorismate to yield 2-succinyl-5-enolpyruvyl-6-hydroxy-3-cyclohexene-1-carboxylate (SEPHCHC). The sequence is that of 2-succinyl-5-enolpyruvyl-6-hydroxy-3-cyclohexene-1-carboxylate synthase from Shewanella sp. (strain W3-18-1).